Reading from the N-terminus, the 310-residue chain is Methionyl-tRNA formyltransferase (310 aa).

110–113 (SLLP) is a binding site for (6S)-5,6,7,8-tetrahydrofolate.

It belongs to the Fmt family.

It catalyses the reaction L-methionyl-tRNA(fMet) + (6R)-10-formyltetrahydrofolate = N-formyl-L-methionyl-tRNA(fMet) + (6S)-5,6,7,8-tetrahydrofolate + H(+). Attaches a formyl group to the free amino group of methionyl-tRNA(fMet). The formyl group appears to play a dual role in the initiator identity of N-formylmethionyl-tRNA by promoting its recognition by IF2 and preventing the misappropriation of this tRNA by the elongation apparatus. This Halorhodospira halophila (strain DSM 244 / SL1) (Ectothiorhodospira halophila (strain DSM 244 / SL1)) protein is Methionyl-tRNA formyltransferase.